A 121-amino-acid polypeptide reads, in one-letter code: Parathyroid hormone-related protein (121 aa).

Positions 1–14 (VGVFLLSYSVPSCG) are cleaved as a signal peptide. Residues 15–24 (RSVEELGRRL) constitute a propeptide that is removed on maturation. The segment at 47-58 (RFFLHHLIAEIH) is important for receptor binding. The interval 61 to 121 (EIRATSEVSP…PGKKKKGKPG (61 aa)) is disordered. Over residues 66–80 (SEVSPNSKPAPNTKN) the composition is skewed to polar residues. A Nuclear localization signal motif is present at residues 98 to 119 (TNKVETYKEQPLKTPGKKKKGK). Basic and acidic residues predominate over residues 99-108 (NKVETYKEQP). Over residues 112 to 121 (PGKKKKGKPG) the composition is skewed to basic residues.

This sequence belongs to the parathyroid hormone family. In terms of assembly, PTHrP interacts with PTH1R (via N-terminal extracellular domain).

The protein localises to the secreted. The protein resides in the cytoplasm. It localises to the nucleus. Functionally, neuroendocrine peptide which is a critical regulator of cellular and organ growth, development, migration, differentiation and survival and of epithelial calcium ion transport. Acts by binding to its receptor, PTH1R, activating G protein-coupled receptor signaling. Regulates endochondral bone development and epithelial-mesenchymal interactions during the formation of the mammary glands and teeth. Required for skeletal homeostasis. Promotes mammary mesenchyme differentiation and bud outgrowth by modulating mesenchymal cell responsiveness to BMPs. Up-regulates BMPR1A expression in the mammary mesenchyme and this increases the sensitivity of these cells to BMPs and allows them to respond to BMP4 in a paracrine and/or autocrine fashion. BMP4 signaling in the mesenchyme, in turn, triggers epithelial outgrowth and augments MSX2 expression, which causes the mammary mesenchyme to inhibit hair follicle formation within the nipple sheath. The polypeptide is Parathyroid hormone-related protein (PTHLH) (Ovis aries (Sheep)).